A 466-amino-acid chain; its full sequence is Probable WRKY transcription factor 32 (466 aa).

Disordered regions lie at residues 1 to 45 (MEED…MEDL) and 140 to 166 (SVPT…PRTP). Positions 8 to 38 (DEAKTYTVEKSEKVEPEKDGLSQFRDEEKSL) are enriched in basic and acidic residues. The WRKY 1 DNA-binding region spans 162-226 (VPRTPARDGY…NKGLHTHEPP (65 aa)). Zn(2+) contacts are provided by cysteine 193, cysteine 198, histidine 221, and histidine 223. Positions 284–317 (HCENEAVEEPEPKRRLKKDNSQSSDSVSKPGKKN) are disordered. Positions 325–390 (GDVGICGDGY…YKGVHNHDMP (66 aa)) form a DNA-binding region, WRKY 2. Residues cysteine 356, cysteine 361, histidine 385, and histidine 387 each coordinate Zn(2+). Residues 410–439 (TSMRTRTDDQVNIPTSSQCSVGRESEKQSK) form a disordered region. Residues 419 to 429 (QVNIPTSSQCS) are compositionally biased toward polar residues.

This sequence belongs to the WRKY group I family.

It localises to the nucleus. In terms of biological role, transcription factor. Interacts specifically with the W box (5'-(T)TGAC[CT]-3'), a frequently occurring elicitor-responsive cis-acting element. The protein is Probable WRKY transcription factor 32 (WRKY32) of Arabidopsis thaliana (Mouse-ear cress).